Reading from the N-terminus, the 171-residue chain is Calcium channel flower homolog (171 aa).

The Cytoplasmic portion of the chain corresponds to 1–31 (MSGSGAAGAAAGPAPPAQEEGMTWWYRWLCR). A helical membrane pass occupies residues 32–52 (LAGVLGAVSCAISGLFNCVTI). Residues 53–56 (HPLN) lie on the Extracellular side of the membrane. A helical membrane pass occupies residues 57–77 (IAAGVWMIMNAFILLLCEAPF). Topologically, residues 78 to 101 (CCQFVEFANTVAEKVDRLRSWQKA) are cytoplasmic. Residues 102–122 (VFYCGMAIVPIVMSLTLTTLL) form a helical membrane-spanning segment. The Extracellular segment spans residues 123–124 (GN). Residues 125 to 141 (AIAFATGVLYGLSALGK) traverse the membrane as a helical segment. Residues 142–171 (KGDAISYARIQQQRQQADEEKLAETFEGEL) are Cytoplasmic-facing.

Belongs to the calcium channel flower family. In terms of assembly, interacts with adaptor protein complex 2 (AP-2). As to expression, expressed in neurons in the brain (at protein level). Expressed in neuroblastoma cell lines (at protein level). Expressed in cytotoxic T-lymphoocytes (at protein level). Low levels of expression in various tissues including the brain, eye, heart, liver and colon. Expression in the heart is at slightly higher levels than isoform 3. Expressed in skin cells. In terms of tissue distribution, very low levels of expression in the brain, liver and eye. Detected at very low levels of expression in skin cells. As to expression, expressed in various tissues, with highest levels of expression in the brain and eye. Expressed in skin cells. Low levels of expression in the liver, colon, heart and spleen. Barely detected in the brain and liver.

The protein localises to the cell membrane. It is found in the vesicle. Functionally, transmembrane protein which mediates synaptic endocytosis and fitness-based cell culling. In response to different stimulus strengths, controls two major modes of synaptic vesicle (SV) retrieval in hippocampal neurons; Clathrin-mediated endocytosis (CME) in response to mild stimulation and activity-dependent bulk endocytosis (ADBE) in response to strong stimulation. In cytotoxic T-lymphoocytes (CTLs) facilitates calcium-dependent endocytosis of cytotoxic granules (CGs) at the immuno synapse. Different isoforms work as fitness fingerprints in 'loser' and 'winner' cells and thereby mediate win/lose decisions as part of the cell competition process. The polypeptide is Calcium channel flower homolog (Cacfd1) (Mus musculus (Mouse)).